A 291-amino-acid chain; its full sequence is Trimeric intracellular cation channel type B (291 aa).

The Lumenal segment spans residues 1-19 (MDSPWDELALAFSRTSMFP). The chain crosses the membrane as a helical span at residues 20 to 33 (FFDIAHYLVSVMAV). At 34-50 (KRQPGAAALAWKNPISS) the chain is on the cytoplasmic side. Residues 51–70 (WFTAMLHCFGGGILSCLLLA) form a helical membrane-spanning segment. The Lumenal segment spans residues 71-82 (EPPLKFLANHTN). A helical membrane pass occupies residues 83-99 (ILLASSIWYITFFCPHD). Residues 100-104 (LVSQG) lie on the Cytoplasmic side of the membrane. A helical membrane pass occupies residues 105–121 (YSYLPVQLLASGMKEVT). Residues lysine 118 and arginine 122 each coordinate a 1,2-diacyl-sn-glycero-3-phospho-(1D-myo-inositol-4,5-bisphosphate). The Lumenal portion of the chain corresponds to 122–139 (RTWKIVGGVTHANSYYKN). The chain crosses the membrane as a helical span at residues 140-156 (GWIVMIAIGWARGAGGT). The Cytoplasmic portion of the chain corresponds to 157-179 (IITNFERLVKGDWKPEGDEWLKM). The helical transmembrane segment at 180–195 (SYPAKVTLLGSVIFTF) threads the bilayer. The Lumenal segment spans residues 196-207 (QHTQHLAISKHN). Residues 208–227 (LMFLYTIFIVATKITMMTTQ) traverse the membrane as a helical segment. Topologically, residues 228–291 (TSTMTFAPFE…VKKKHTKKNE (64 aa)) are cytoplasmic. The segment at 256-291 (KKSEAKSPSNGVGSLASKPVDVASDNVKKKHTKKNE) is disordered. Serine 262 is subject to Phosphoserine.

It belongs to the TMEM38 family. Homotrimer; conformation seems to be controled by binding to diacylglycerol (DAG).

It is found in the endoplasmic reticulum membrane. The enzyme catalyses K(+)(in) = K(+)(out). Channel activity is activated by increased cytosolic Ca(2+) levels and blocked by luminal high Ca(2+) levels. Intracellular monovalent cation channel required for maintenance of rapid intracellular calcium release. Acts as a potassium counter-ion channel that functions in synchronization with calcium release from intracellular stores. Activated by increased cytosolic Ca(2+) levels. This chain is Trimeric intracellular cation channel type B, found in Homo sapiens (Human).